Here is an 81-residue protein sequence, read N- to C-terminus: Photosystem I iron-sulfur center (81 aa).

4Fe-4S ferredoxin-type domains are found at residues 2–31 (SHAVKIYDTCIGCTQCVRACPLDVLEMVPW) and 39–68 (IASSPRTEDCVGCKRCETACPTDFLSIRVY). [4Fe-4S] cluster is bound by residues C11, C14, C17, C21, C48, C51, C54, and C58.

In terms of assembly, the cyanobacterial PSI reaction center is composed of one copy each of PsaA,B,C,D,E,F,I,J,K,L,M and X, and forms trimeric complexes. [4Fe-4S] cluster serves as cofactor.

It is found in the cellular thylakoid membrane. The enzyme catalyses reduced [plastocyanin] + hnu + oxidized [2Fe-2S]-[ferredoxin] = oxidized [plastocyanin] + reduced [2Fe-2S]-[ferredoxin]. Apoprotein for the two 4Fe-4S centers FA and FB of photosystem I (PSI); essential for photochemical activity. FB is the terminal electron acceptor of PSI, donating electrons to ferredoxin. The C-terminus interacts with PsaA/B/D and helps assemble the protein into the PSI complex. Required for binding of PsaD and PsaE to PSI. PSI is a plastocyanin/cytochrome c6-ferredoxin oxidoreductase, converting photonic excitation into a charge separation, which transfers an electron from the donor P700 chlorophyll pair to the spectroscopically characterized acceptors A0, A1, FX, FA and FB in turn. The chain is Photosystem I iron-sulfur center from Prochlorococcus marinus (strain NATL2A).